Reading from the N-terminus, the 411-residue chain is Peptidase T (411 aa).

His78 serves as a coordination point for Zn(2+). Asp80 is a catalytic residue. Asp140 contacts Zn(2+). The active-site Proton acceptor is the Glu173. Positions 174, 196, and 379 each coordinate Zn(2+).

This sequence belongs to the peptidase M20B family. Zn(2+) is required as a cofactor.

It localises to the cytoplasm. The catalysed reaction is Release of the N-terminal residue from a tripeptide.. Functionally, cleaves the N-terminal amino acid of tripeptides. The polypeptide is Peptidase T (Yersinia pseudotuberculosis serotype O:3 (strain YPIII)).